A 944-amino-acid polypeptide reads, in one-letter code: Protocadherin gamma-C5 (944 aa).

A signal peptide spans 1 to 29; sequence MGPKTLPQLAGKWQVLCMLSLCCWGWVSG. Cadherin domains are found at residues 30 to 133, 134 to 242, 243 to 350, 351 to 454, 455 to 564, and 571 to 677; these read QLRY…SPSF, ATPE…APTF, QSSV…APEV, LLAS…APRF, NQQL…APAV, and WEHS…MPKS. Over 30-693 the chain is Extracellular; the sequence is QLRYSVVEES…PPERSDLTLY (664 aa). 3 N-linked (GlcNAc...) asparagine glycosylation sites follow: N265, N443, and N547. The helical transmembrane segment at 694–714 threads the bilayer; that stretch reads LIVALATVSLLSLVTFTFLSA. The Cytoplasmic portion of the chain corresponds to 715–944; it reads KCLQGNADGD…KKKSGKKEKK (230 aa). Disordered stretches follow at residues 722–747, 812–853, and 914–944; these read DGDG…QSSP, SNTL…WPNN, and ATLT…KEKK. Residues 820 to 853 are compositionally biased toward polar residues; sequence QQAPPNTDWRFSQAQRPGTSGSQNGDDTGTWPNN. Over residues 934–944 the composition is skewed to basic residues; sequence NKKKSGKKEKK.

Its subcellular location is the cell membrane. In terms of biological role, potential calcium-dependent cell-adhesion protein. May be involved in the establishment and maintenance of specific neuronal connections in the brain. This is Protocadherin gamma-C5 (PCDHGC5) from Pan troglodytes (Chimpanzee).